Consider the following 166-residue polypeptide: S-phase kinase-associated protein 1 homolog (166 aa).

The segment at 105–166 (ILAANYLDIK…ENKWAEEATS (62 aa)) is interaction with the F-box domain of F-box proteins.

The protein belongs to the SKP1 family. Component of multiple SCF (SKP1-CUL1-F-box) E3 ubiquitin-protein ligase complexes formed of CUL1, SKP1, RBX1 and a variable F-box domain-containing protein as substrate-specific subunit.

It functions in the pathway protein modification; protein ubiquitination. Functionally, essential component of the SCF (SKP1-CUL1-F-box protein) ubiquitin ligase complex, which mediates the ubiquitination of proteins involved in cell cycle progression, signal transduction and transcription. In the SCF complex, serves as an adapter that links the F-box protein to CUL1. The functional specificity of the SCF complex depends on the F-box protein as substrate recognition component. Its association with the holoenzyme telomerase ribonucleoprotein complex suggests that it may play a role in turnover of holoenzyme telomerase complex components. The chain is S-phase kinase-associated protein 1 homolog from Tetrahymena thermophila (strain SB210).